Here is a 398-residue protein sequence, read N- to C-terminus: Serine/threonine-protein phosphatase 2A activator (398 aa).

Residues Arg-137, Thr-142, and Gly-143 each contribute to the ATP site. The Mg(2+) site is built by Gly-197 and Asp-203. ATP-binding residues include Pro-293, Gln-296, and His-297. Over residues 343 to 352 (PVATAPPPPA) the composition is skewed to pro residues. Residues 343–398 (PVATAPPPPAESLSIEQNVGDSSSESSDNSVVLRPSTSSSSLVAAAEGSGDKPSKE) form a disordered region. A compositionally biased stretch (low complexity) spans 363–388 (DSSSESSDNSVVLRPSTSSSSLVAAA).

The protein belongs to the PTPA-type PPIase family. Associates with PP2A heterodimeric core enzyme PP2A(D), composed of a catalytic subunit (subunit C) and a constant regulatory subunit (PR65 or subunit A). Interacts with the catalytic subunit Pp4-19C of the serine/threonine-protein phosphatase 4 (PP4) complex; thereby mediating basal localization of the Miranda (Mira) complex; probably by facilitating the dephosphorylation of Mira.

Its subcellular location is the cytoplasm. The protein resides in the nucleus. It catalyses the reaction [protein]-peptidylproline (omega=180) = [protein]-peptidylproline (omega=0). In terms of biological role, PPIases accelerate the folding of proteins. It catalyzes the cis-trans isomerization of proline imidic peptide bonds in oligopeptides. Acts as a regulatory subunit for serine/threonine-protein phosphatase 2A (PP2A). Modulates PP2A activity or substrate specificity, probably by inducing a conformational change in the catalytic subunit, a proposed direct target of the PPIase. Acts as mediator for the basal localization of the Miranda (Mira) complex during mitosis of larval neuroblast asymmetric division. Associates with the phosphatase 4 (PP4) complex to mediate basal localization of Mira; probably by facilitating the dephosphorylation of Mira. Cortical association of Mira mediated by the PTPA-PP4 complex seems to be independent of aPKC activity. This chain is Serine/threonine-protein phosphatase 2A activator, found in Drosophila melanogaster (Fruit fly).